Here is a 151-residue protein sequence, read N- to C-terminus: Globin CTT-VIII (151 aa).

In terms of domain architecture, Globin spans 4 to 148 (PMSADQLALF…MFFYILHALE (145 aa)). Heme b contacts are provided by histidine 62 and histidine 97.

It belongs to the globin family. Homodimer.

This is Globin CTT-VIII (CTT-8) from Chironomus thummi thummi (Midge).